The primary structure comprises 375 residues: Succinyl-diaminopimelate desuccinylase (375 aa).

His75 lines the Zn(2+) pocket. Residue Asp77 is part of the active site. Residue Asp106 coordinates Zn(2+). The active-site Proton acceptor is the Glu136. Glu137, Glu165, and His348 together coordinate Zn(2+).

This sequence belongs to the peptidase M20A family. DapE subfamily. As to quaternary structure, homodimer. Zn(2+) is required as a cofactor. It depends on Co(2+) as a cofactor.

It catalyses the reaction N-succinyl-(2S,6S)-2,6-diaminopimelate + H2O = (2S,6S)-2,6-diaminopimelate + succinate. Its pathway is amino-acid biosynthesis; L-lysine biosynthesis via DAP pathway; LL-2,6-diaminopimelate from (S)-tetrahydrodipicolinate (succinylase route): step 3/3. Catalyzes the hydrolysis of N-succinyl-L,L-diaminopimelic acid (SDAP), forming succinate and LL-2,6-diaminopimelate (DAP), an intermediate involved in the bacterial biosynthesis of lysine and meso-diaminopimelic acid, an essential component of bacterial cell walls. The sequence is that of Succinyl-diaminopimelate desuccinylase from Novosphingobium aromaticivorans (strain ATCC 700278 / DSM 12444 / CCUG 56034 / CIP 105152 / NBRC 16084 / F199).